A 954-amino-acid polypeptide reads, in one-letter code: Centrosomal protein of 112 kDa (954 aa).

A coiled-coil region spans residues 276–954; that stretch reads QKHDAEVQKI…EELTTYQSRR (679 aa).

The protein localises to the cytoplasm. Its subcellular location is the cytoskeleton. It localises to the microtubule organizing center. It is found in the centrosome. In Mus musculus (Mouse), this protein is Centrosomal protein of 112 kDa (Cep112).